A 586-amino-acid chain; its full sequence is Protein BONZAI 2 (586 aa).

Residue glycine 2 is the site of N-myristoyl glycine attachment. C2 domains follow at residues 25-164 (SAAT…ALEL) and 176-303 (PQHN…NLAL). The Ca(2+) site is built by aspartate 62, aspartate 68, aspartate 121, and aspartate 123. One can recognise a VWFA domain in the interval 344 to 563 (NFMVAIDFTA…SVVEALLAEL (220 aa)).

It belongs to the copine family. In terms of assembly, interacts with BAP1 and BAP2. Ca(2+) serves as cofactor. In terms of tissue distribution, expressed in roots, leaves and stems. Expressed in young growing tissues.

Its subcellular location is the cell membrane. Its function is as follows. Negative regulator of cell death and defense responses. May repress a number of R genes and may have effects in promoting growth and development. May function in membrane trafficking and in fusion of vesicles with plasma membrane. This chain is Protein BONZAI 2 (BON2), found in Arabidopsis thaliana (Mouse-ear cress).